A 412-amino-acid chain; its full sequence is NF-kappa-B essential modulator (412 aa).

The tract at residues 1–48 is disordered; it reads MNKHPWKNQLSEMVQPSGGPAEDQDMLGEESSLGKPAMLHLPSEQGTP. Residues 1–197 are required for interaction with and ubiquitination by MARCHF2; sequence MNKHPWKNQL…REVLQQQHSV (197 aa). Phosphoserine; by IKKB occurs at positions 31 and 43. Residues 44 to 111 form an interaction with CHUK/IKBKB region; sequence EQGTPETLQR…KLVERLSLEK (68 aa). Residues 49-345 adopt a coiled-coil conformation; the sequence is ETLQRCLEEN…LKVGCHESAR (297 aa). S68 bears the Phosphoserine mark. S85 is subject to Phosphoserine; by ATM. Glycyl lysine isopeptide (Lys-Gly) (interchain with G-Cter in ubiquitin) cross-links involve residues K111, K139, K143, K226, and K246. The tract at residues 150-250 is interaction with TANK; it reads LGELQESQSR…YDSHIKSSKG (101 aa). The tract at residues 242–343 is ubiquitin-binding (UBAN); that stretch reads DSHIKSSKGM…NKLKVGCHES (102 aa). Residues 246–358 are self-association; that stretch reads KSSKGMQLED…MRKRHVETPQ (113 aa). The interval 249–412 is required for interaction with TNFAIP3; it reads KGMQLEDLRQ…LQIHVMECIE (164 aa). Positions 250 to 339 are linear polyubiquitin-binding, does not bind to 'Lys-63'-linked polyubiquitin; that stretch reads GMQLEDLRQQ…QREFNKLKVG (90 aa). Residue K270 forms a Glycyl lysine isopeptide (Lys-Gly) (interchain with G-Cter in SUMO); alternate linkage. Residue K270 forms a Glycyl lysine isopeptide (Lys-Gly) (interchain with G-Cter in ubiquitin); alternate linkage. Residues K276, K278, K285, and K295 each participate in a glycyl lysine isopeptide (Lys-Gly) (interchain with G-Cter in ubiquitin) cross-link. A Glycyl lysine isopeptide (Lys-Gly) (interchain with G-Cter in SUMO); alternate cross-link involves residue K302. Residue K302 forms a Glycyl lysine isopeptide (Lys-Gly) (interchain with G-Cter in ubiquitin); alternate linkage. Glycyl lysine isopeptide (Lys-Gly) (interchain with G-Cter in ubiquitin) cross-links involve residues K314, K318, and K319. Positions 315–336 are leucine-zipper; the sequence is LVEKKEYLQEQLEQLQREFNKL. S369 carries the phosphoserine; by IKKB modification. Positions 375 to 412 are interaction with CYLD; it reads SNQRRSPPEEPPDFCCPKCQYQAPDMDTLQIHVMECIE. Residue S380 is modified to Phosphoserine. The CCHC NOA-type zinc-finger motif lies at 382–412; the sequence is PEEPPDFCCPKCQYQAPDMDTLQIHVMECIE. C390 is a binding site for Zn(2+). A Glycyl lysine isopeptide (Lys-Gly) (interchain with G-Cter in ubiquitin) cross-link involves residue K392. Residues C393, H406, and C410 each coordinate Zn(2+).

As to quaternary structure, homodimer; disulfide-linked. Component of the I-kappa-B-kinase (IKK) core complex consisting of CHUK, IKBKB and IKBKG; probably four alpha/CHUK-beta/IKBKB dimers are associated with four gamma/IKBKG subunits. The IKK core complex seems to associate with regulatory or adapter proteins to form a IKK-signalosome holo-complex. The IKK complex associates with TERF2IP/RAP1, leading to promote IKK-mediated phosphorylation of RELA/p65. Part of a complex composed of NCOA2, NCOA3, CHUK/IKKA, IKBKB, IKBKG and CREBBP. Interacts with COPS3, CYLD, NALP2, TRPC4AP and PIDD1. Interacts with ATM; the complex is exported from the nucleus. Interacts with TRAF6. Interacts with IKBKE. Interacts with TANK; the interaction is enhanced by IKBKE and TBK1. Part of a ternary complex consisting of TANK, IKBKB and IKBKG. Interacts with ZFAND5. Interacts with RIPK2. Interacts with TNIP1 and TNFAIP3; TNIP1 facilitates the TNFAIP3-mediated de-ubiquitination of IKBKG. Interacts with TNFAIP3; the interaction is induced by TNF stimulation and by polyubiquitin. Binds (via UBAN region) polyubiquitin; binds both 'Lys-63'-linked and linear polyubiquitin, with higher affinity for linear ubiquitin. Interacts with NLRP10. Interacts with TANK; this interaction increases in response to DNA damage. Interacts with USP10; this interaction increases in response to DNA damage. Interacts with ZC3H12A; this interaction increases in response to DNA damage. Interacts with IFIT5; the interaction synergizes the recruitment of IKK to MAP3K7 and enhances IKK phosphorylation. Interacts with TRIM29; this interaction induces IKBKG/NEMO ubiquitination and proteolytic degradation. Interacts with TRIM13; this interaction leads to IKBKG/NEMO ubiquitination. Interacts with ARFIP2. Interacts with RIPK1. Interacts with (ubiquitinated) BCL10; interaction with polyubiquitinated BCL10 via both 'Lys-63'-linked and linear ubiquitin is required for TCR-induced NF-kappa-B activation. Interacts with MARCHF2; during the late stages of macrophage viral and bacterial infection; the interaction leads to ubiquitination and degradation of IKBKG/NEMO. In terms of processing, phosphorylation at Ser-68 attenuates aminoterminal homodimerization. Post-translationally, polyubiquitinated on Lys-278 via 'Lys-63'-linked ubiquitin; the ubiquitination is mediated downstream of NOD2 and RIPK2 and probably plays a role in signaling by facilitating interactions with ubiquitin domain-containing proteins and activates the NF-kappa-B pathway. Polyubiquitinated on Lys-278 and Lys-302 through 'Lys-63'-linked ubiquitin; the ubiquitination is mediated by BCL10, MALT1 and TRAF6 and probably plays a role in signaling by facilitating interactions with ubiquitin domain-containing proteins and activates the NF-kappa-B pathway. Monoubiquitinated on Lys-270 and Lys-302; promotes nuclear export. Polyubiquitinated through 'Lys-27' by TRIM23; involved in antiviral innate and inflammatory responses. Linear polyubiquitinated on Lys-111, Lys-143, Lys-226, Lys-246, Lys-270, Lys-278, Lys-285, Lys-295, Lys-302 and Lys-319; the head-to-tail polyubiquitination is mediated by the LUBAC complex and plays a key role in NF-kappa-B activation. Deubiquitinated by USP10 in a TANK-dependent and -independent manner, leading to the negative regulation of NF-kappa-B signaling upon DNA damage. Ubiquitinated at Lys-319 by MARCHF2 following bacterial and viral infection which leads to its degradation. Polyubiquitinated via 'Lys-29'-linked ubiquitin; leading to lysosomal degradation. Sumoylated on Lys-270 and Lys-302 with SUMO1; the modification results in phosphorylation of Ser-85 by ATM leading to a replacement of the sumoylation by mono-ubiquitination on these residues. In terms of processing, neddylated by TRIM40, resulting in stabilization of NFKBIA and down-regulation of NF-kappa-B activity.

The protein localises to the cytoplasm. Its subcellular location is the nucleus. In terms of biological role, regulatory subunit of the IKK core complex which phosphorylates inhibitors of NF-kappa-B thus leading to the dissociation of the inhibitor/NF-kappa-B complex and ultimately the degradation of the inhibitor. Its binding to scaffolding polyubiquitin plays a key role in IKK activation by multiple signaling receptor pathways. Can recognize and bind both 'Lys-63'-linked and linear polyubiquitin upon cell stimulation, with a much highr affinity for linear polyubiquitin. Could be implicated in NF-kappa-B-mediated protection from cytokine toxicity. Essential for viral activation of IRF3. Involved in TLR3- and IFIH1-mediated antiviral innate response; this function requires 'Lys-27'-linked polyubiquitination. The sequence is that of NF-kappa-B essential modulator (Ikbkg) from Mus musculus (Mouse).